Consider the following 250-residue polypeptide: Small ribosomal subunit protein uS2 (250 aa).

Belongs to the universal ribosomal protein uS2 family.

The polypeptide is Small ribosomal subunit protein uS2 (Paraburkholderia xenovorans (strain LB400)).